A 620-amino-acid chain; its full sequence is Endoglucanase 10 (620 aa).

The tract at residues 1 to 26 is disordered; the sequence is MFGRDPWGGPLEISNADSATDDDRSR. A helical; Signal-anchor for type II membrane protein membrane pass occupies residues 72–92; sequence IFMWTVGTILGVGLFIGFVMM. Asp-165 (nucleophile) is an active-site residue. Asn-216, Asn-314, Asn-323, Asn-344, Asn-408, and Asn-425 each carry an N-linked (GlcNAc...) asparagine glycan. Residues His-513 and Asp-561 contribute to the active site. Residue Asn-567 is glycosylated (N-linked (GlcNAc...) asparagine). The active site involves Glu-570.

Belongs to the glycosyl hydrolase 9 (cellulase E) family. In terms of tissue distribution, ubiquitous.

It is found in the membrane. It catalyses the reaction Endohydrolysis of (1-&gt;4)-beta-D-glucosidic linkages in cellulose, lichenin and cereal beta-D-glucans.. This Oryza sativa subsp. japonica (Rice) protein is Endoglucanase 10 (GLU2).